Here is a 337-residue protein sequence, read N- to C-terminus: Phosphate acyltransferase (337 aa).

This sequence belongs to the PlsX family. In terms of assembly, homodimer. Probably interacts with PlsY.

The protein localises to the cytoplasm. The catalysed reaction is a fatty acyl-[ACP] + phosphate = an acyl phosphate + holo-[ACP]. Its pathway is lipid metabolism; phospholipid metabolism. Catalyzes the reversible formation of acyl-phosphate (acyl-PO(4)) from acyl-[acyl-carrier-protein] (acyl-ACP). This enzyme utilizes acyl-ACP as fatty acyl donor, but not acyl-CoA. This is Phosphate acyltransferase from Moritella marina (Vibrio marinus).